We begin with the raw amino-acid sequence, 258 residues long: uncharacterized protein (258 aa).

Transmembrane regions (helical) follow at residues 21–41 (LIWL…TIYY), 73–93 (LSQF…GSVA), 119–139 (WLIQ…LAYY), 153–173 (FAAS…AGLA), 182–202 (GAAA…VSLF), and 229–249 (FFGW…VFSV).

The protein resides in the cell membrane. This is an uncharacterized protein from Bacillus subtilis (strain 168).